The chain runs to 159 residues: 2-C-methyl-D-erythritol 2,4-cyclodiphosphate synthase (159 aa).

Asp-8 and His-10 together coordinate a divalent metal cation. 4-CDP-2-C-methyl-D-erythritol 2-phosphate contacts are provided by residues 8–10 (DVH) and 34–35 (HS). Position 42 (His-42) interacts with a divalent metal cation. 4-CDP-2-C-methyl-D-erythritol 2-phosphate contacts are provided by residues 56–58 (DIG), 61–65 (FPDTD), 100–106 (AQAPKML), 132–135 (TTTE), Phe-139, and Arg-142.

Belongs to the IspF family. As to quaternary structure, homotrimer. A divalent metal cation is required as a cofactor.

It catalyses the reaction 4-CDP-2-C-methyl-D-erythritol 2-phosphate = 2-C-methyl-D-erythritol 2,4-cyclic diphosphate + CMP. It participates in isoprenoid biosynthesis; isopentenyl diphosphate biosynthesis via DXP pathway; isopentenyl diphosphate from 1-deoxy-D-xylulose 5-phosphate: step 4/6. Involved in the biosynthesis of isopentenyl diphosphate (IPP) and dimethylallyl diphosphate (DMAPP), two major building blocks of isoprenoid compounds. Catalyzes the conversion of 4-diphosphocytidyl-2-C-methyl-D-erythritol 2-phosphate (CDP-ME2P) to 2-C-methyl-D-erythritol 2,4-cyclodiphosphate (ME-CPP) with a corresponding release of cytidine 5-monophosphate (CMP). The protein is 2-C-methyl-D-erythritol 2,4-cyclodiphosphate synthase of Escherichia coli O127:H6 (strain E2348/69 / EPEC).